The sequence spans 253 residues: MWARTAAWVFGLPETLREICYRRDNVKPVDELQKTIGHRFGDMELLLTAMTHSSWANEQAVPVEHNERLEFLGDAVLELCVSEELFRRFPSAREGDLTRMRSRLVSKPSLEGVARELRLDMSLRLGKGEESQGGRERGSLLSDALEAMLGAVFLDAGYIAAKGVVMRILGPHFPEALVPVRTKDYKSQLQELTQKLFRDRPVYTLLGSSGPEHDKQFDVRVVLPDGTVFEATGPSMKRAEQMAAARAVATLDK.

Residues 29 to 157 (VDELQKTIGH…MLGAVFLDAG (129 aa)) enclose the RNase III domain. Mg(2+) is bound at residue glutamate 70. Aspartate 74 is a catalytic residue. 2 residues coordinate Mg(2+): aspartate 143 and glutamate 146. The active site involves glutamate 146. Residues 184–253 (DYKSQLQELT…AARAVATLDK (70 aa)) enclose the DRBM domain.

The protein belongs to the ribonuclease III family. In terms of assembly, homodimer. Requires Mg(2+) as cofactor.

Its subcellular location is the cytoplasm. It carries out the reaction Endonucleolytic cleavage to 5'-phosphomonoester.. In terms of biological role, digests double-stranded RNA. Involved in the processing of primary rRNA transcript to yield the immediate precursors to the large and small rRNAs (23S and 16S). Processes some mRNAs, and tRNAs when they are encoded in the rRNA operon. Processes pre-crRNA and tracrRNA of type II CRISPR loci if present in the organism. The chain is Ribonuclease 3 from Nitratidesulfovibrio vulgaris (strain ATCC 29579 / DSM 644 / CCUG 34227 / NCIMB 8303 / VKM B-1760 / Hildenborough) (Desulfovibrio vulgaris).